A 102-amino-acid chain; its full sequence is Omega-hexatoxin-Hi2a (102 aa).

Residues 1–23 (MKFSKLSLTLALILTQALLVVCG) form the signal peptide. A propeptide spanning residues 24-56 (KINEDFMENGLESHALHDEIRKPIDTEKADAER) is cleaved from the precursor. Intrachain disulfides connect C61–C75, C68–C81, and C74–C86. L98 bears the Leucine amide mark. Positions 100–102 (RAL) are excised as a propeptide.

It belongs to the neurotoxin 15 family. 02 (omega-actx) subfamily. In terms of tissue distribution, expressed by the venom gland.

The protein localises to the secreted. In terms of biological role, potent inhibitor of insect, but not mammalian, voltage-gated calcium channels (Cav). The sequence is that of Omega-hexatoxin-Hi2a from Hadronyche infensa (Fraser island funnel-web spider).